Consider the following 161-residue polypeptide: Cyclic pyranopterin monophosphate synthase (161 aa).

Residues 75-77 and 113-114 contribute to the substrate site; these read LCH and ME. Asp128 is an active-site residue.

Belongs to the MoaC family. As to quaternary structure, homohexamer; trimer of dimers.

It catalyses the reaction (8S)-3',8-cyclo-7,8-dihydroguanosine 5'-triphosphate = cyclic pyranopterin phosphate + diphosphate. Its pathway is cofactor biosynthesis; molybdopterin biosynthesis. Catalyzes the conversion of (8S)-3',8-cyclo-7,8-dihydroguanosine 5'-triphosphate to cyclic pyranopterin monophosphate (cPMP). The protein is Cyclic pyranopterin monophosphate synthase of Escherichia coli O139:H28 (strain E24377A / ETEC).